A 177-amino-acid polypeptide reads, in one-letter code: Large ribosomal subunit protein uL6 (177 aa).

It belongs to the universal ribosomal protein uL6 family. As to quaternary structure, part of the 50S ribosomal subunit.

This protein binds to the 23S rRNA, and is important in its secondary structure. It is located near the subunit interface in the base of the L7/L12 stalk, and near the tRNA binding site of the peptidyltransferase center. The protein is Large ribosomal subunit protein uL6 of Edwardsiella ictaluri (strain 93-146).